A 695-amino-acid chain; its full sequence is DNA ligase (695 aa).

NAD(+) is bound by residues D44–D48, S93–L94, and E123. K125 functions as the N6-AMP-lysine intermediate in the catalytic mechanism. NAD(+) is bound by residues R146, E184, K300, and K324. Zn(2+) is bound by residues C418, C421, C436, and C442. Residues S605–R694 form the BRCT domain.

This sequence belongs to the NAD-dependent DNA ligase family. LigA subfamily. The cofactor is Mg(2+). Mn(2+) serves as cofactor.

It catalyses the reaction NAD(+) + (deoxyribonucleotide)n-3'-hydroxyl + 5'-phospho-(deoxyribonucleotide)m = (deoxyribonucleotide)n+m + AMP + beta-nicotinamide D-nucleotide.. Functionally, DNA ligase that catalyzes the formation of phosphodiester linkages between 5'-phosphoryl and 3'-hydroxyl groups in double-stranded DNA using NAD as a coenzyme and as the energy source for the reaction. It is essential for DNA replication and repair of damaged DNA. The chain is DNA ligase from Acidothermus cellulolyticus (strain ATCC 43068 / DSM 8971 / 11B).